Reading from the N-terminus, the 400-residue chain is Subtilisin-like protease CPC735_047380 (400 aa).

Positions 1-19 are cleaved as a signal peptide; the sequence is MARINVVVSFLAALAVVQA. The propeptide occupies 20 to 118; the sequence is AQLLNLDGQK…IEPQRTFRAF (99 aa). Positions 35–116 constitute an Inhibitor I9 domain; it reads SYVVVMNDGL…NYIEPQRTFR (82 aa). The 273-residue stretch at 128–400 folds into the Peptidase S8 domain; it reads SWGLGRISHT…DKLLYNGSGQ (273 aa). Residue Asn-153 is glycosylated (N-linked (GlcNAc...) asparagine). Active-site charge relay system residues include Asp-160 and His-191. Residues Asn-244 and Asn-252 are each glycosylated (N-linked (GlcNAc...) asparagine). Residue Ser-346 is the Charge relay system of the active site. N-linked (GlcNAc...) asparagine glycosylation is present at Asn-396.

It belongs to the peptidase S8 family.

The protein resides in the secreted. Secreted subtilisin-like serine protease with keratinolytic activity that contributes to pathogenicity. The protein is Subtilisin-like protease CPC735_047380 of Coccidioides posadasii (strain C735) (Valley fever fungus).